Here is a 141-residue protein sequence, read N- to C-terminus: HTH-type transcriptional regulator ZntR (141 aa).

One can recognise an HTH merR-type domain in the interval 1–70 (MYRIGELAKM…LESIRELLSI (70 aa)). Residues 4–23 (IGELAKMAEVTPDTIRYYEK) constitute a DNA-binding region (H-T-H motif). The Zn(2+) site is built by Cys-114, Cys-115, His-119, and Cys-124.

Homodimer.

In terms of biological role, zinc-responsive transcriptional regulator of zntA. This Escherichia coli O157:H7 protein is HTH-type transcriptional regulator ZntR (zntR).